A 482-amino-acid chain; its full sequence is Class E basic helix-loop-helix protein 41 (482 aa).

K31 participates in a covalent cross-link: Glycyl lysine isopeptide (Lys-Gly) (interchain with G-Cter in SUMO2). A bHLH domain is found at 44-99 (TYKLPHRLIEKKRRDRINECIAQLKDLLPEHLKLTTLGHLEKAVVLELTLKHLKAL). Residues 67–71 (LKDLL) are necessary for interaction with RXRA and repressor activity towards RXRA. K121 participates in a covalent cross-link: Glycyl lysine isopeptide (Lys-Gly) (interchain with G-Cter in SUMO2). In terms of domain architecture, Orange spans 131 to 166 (FHSGFQTCAKEVLQYLSRFESWTPREPRCVQLINHL). K210 participates in a covalent cross-link: Glycyl lysine isopeptide (Lys-Gly) (interchain with G-Cter in SUMO2). 2 disordered regions span residues 228-298 (AELA…GGAA) and 438-482 (VAPL…KEAP). The span at 246 to 256 (AEARPDREKGK) shows a compositional bias: basic and acidic residues. K266 participates in a covalent cross-link: Glycyl lysine isopeptide (Lys-Gly) (interchain with G-Cter in SUMO2). Residues 285–297 (RGGGSGGGPGGGA) show a composition bias toward gly residues.

In terms of assembly, homodimer. Heterodimer with BHLHE40/DEC1. Interacts with CIART and BMAL1. Interacts with RXRA. Interacts with NR0B2 and HNF1A. Highly expressed in skeletal muscle and brain, moderately expressed in pancreas and heart, weakly expressed in placenta, lung, liver and kidney.

The protein localises to the nucleus. In terms of biological role, transcriptional repressor involved in the regulation of the circadian rhythm by negatively regulating the activity of the clock genes and clock-controlled genes. Acts as the negative limb of a novel autoregulatory feedback loop (DEC loop) which differs from the one formed by the PER and CRY transcriptional repressors (PER/CRY loop). Both these loops are interlocked as it represses the expression of PER1 and in turn is repressed by PER1/2 and CRY1/2. Represses the activity of the circadian transcriptional activator: CLOCK-BMAL1 heterodimer by competing for the binding to E-box elements (5'-CACGTG-3') found within the promoters of its target genes. Negatively regulates its own expression and the expression of DBP and BHLHE41/DEC2. Acts as a corepressor of RXR and the RXR-LXR heterodimers and represses the ligand-induced RXRA/B/G, NR1H3/LXRA, NR1H4 and VDR transactivation activity. Inhibits HNF1A-mediated transactivation of CYP1A2, CYP2E1 AND CYP3A11. This chain is Class E basic helix-loop-helix protein 41, found in Homo sapiens (Human).